The chain runs to 518 residues: Nuclear receptor ROR-gamma (518 aa).

The segment at 1-30 (MDRAPQRQHRASRELLAAKKTHTSQIEVIP) is modulating. 2 NR C4-type zinc fingers span residues 31–51 (CKIC…CEGC) and 67–91 (CTRQ…LQKC). Positions 31–96 (CKICGDKSSG…RLQKCLALGM (66 aa)) form a DNA-binding region, nuclear receptor. Disordered stretches follow at residues 105–183 (RMSK…SGSG) and 238–258 (HPGL…SFRS). A compositionally biased stretch (basic and acidic residues) spans 109–118 (KQRDSLHAEV). Residues 119 to 130 (QKQLQQRQQQQQ) show a composition bias toward low complexity. One can recognise an NR LBD domain in the interval 269 to 508 (EIEHLVQSVC…PPLYKELFST (240 aa)). Residues 501-506 (LYKELF) carry the AF-2 motif.

This sequence belongs to the nuclear hormone receptor family. NR1 subfamily. As to quaternary structure, interacts (via AF-2 motif) with the coactivator NCOA2 (via LXXLL motif). Interacts with the corepressor NCOR1. Interacts with CRY1. Interacts (via AF-2 motif) with the coactivators NCOA1 and PPARGC1A (via LXXLL motif). Interacts (via AF-2 motif) with PROX1. Interacts with FOXP3. Interacts with NR0B2. As to expression, isoform 1 is widely expressed in many tissues, including liver and adipose, and highly expressed in skeletal muscle. Isoform 2 is primarily expressed in immature thymocytes.

The protein resides in the nucleus. In terms of biological role, nuclear receptor that binds DNA as a monomer to ROR response elements (RORE) containing a single core motif half-site 5'-AGGTCA-3' preceded by a short A-T-rich sequence. Key regulator of cellular differentiation, immunity, peripheral circadian rhythm as well as lipid, steroid, xenobiotics and glucose metabolism. Considered to have intrinsic transcriptional activity, have some natural ligands like oxysterols that act as agonists (25-hydroxycholesterol) or inverse agonists (7-oxygenated sterols), enhancing or repressing the transcriptional activity, respectively. Recruits distinct combinations of cofactors to target gene regulatory regions to modulate their transcriptional expression, depending on the tissue, time and promoter contexts. Regulates the circadian expression of clock genes such as CRY1, BMAL1 and NR1D1 in peripheral tissues and in a tissue-selective manner. Competes with NR1D1 for binding to their shared DNA response element on some clock genes such as BMAL1, CRY1 and NR1D1 itself, resulting in NR1D1-mediated repression or RORC-mediated activation of the expression, leading to the circadian pattern of clock genes expression. Therefore influences the period length and stability of the clock. Involved in the regulation of the rhythmic expression of genes involved in glucose and lipid metabolism, including PLIN2 and AVPR1A. Negative regulator of adipocyte differentiation through the regulation of early phase genes expression, such as MMP3. Controls adipogenesis as well as adipocyte size and modulates insulin sensitivity in obesity. In liver, has specific and redundant functions with RORA as positive or negative modulator of expression of genes encoding phase I and Phase II proteins involved in the metabolism of lipids, steroids and xenobiotics, such as SULT1E1. Also plays a role in the regulation of hepatocyte glucose metabolism through the regulation of G6PC1 and PCK1. Regulates the rhythmic expression of PROX1 and promotes its nuclear localization. Plays an indispensable role in the induction of IFN-gamma dependent anti-mycobacterial systemic immunity. Its function is as follows. Essential for thymopoiesis and the development of several secondary lymphoid tissues, including lymph nodes and Peyer's patches. Required for the generation of LTi (lymphoid tissue inducer) cells. Regulates thymocyte survival through DNA-binding on ROREs of target gene promoter regions and recruitment of coactivaros via the AF-2. Also plays a key role, downstream of IL6 and TGFB and synergistically with RORA, for lineage specification of uncommitted CD4(+) T-helper (T(H)) cells into T(H)17 cells, antagonizing the T(H)1 program. Probably regulates IL17 and IL17F expression on T(H) by binding to the essential enhancer conserved non-coding sequence 2 (CNS2) in the IL17-IL17F locus. May also play a role in the pre-TCR activation cascade leading to the maturation of alpha/beta T-cells and may participate in the regulation of DNA accessibility in the TCR-J(alpha) locus. This Homo sapiens (Human) protein is Nuclear receptor ROR-gamma (RORC).